Consider the following 325-residue polypeptide: Biotin synthase (325 aa).

The 220-residue stretch at 43–262 (CSVETAQLLS…VAVARLLMPR (220 aa)) folds into the Radical SAM core domain. [4Fe-4S] cluster is bound by residues C58, C62, and C65. The [2Fe-2S] cluster site is built by C102, C133, C193, and R266.

The protein belongs to the radical SAM superfamily. Biotin synthase family. Homodimer. [4Fe-4S] cluster serves as cofactor. Requires [2Fe-2S] cluster as cofactor.

The enzyme catalyses (4R,5S)-dethiobiotin + (sulfur carrier)-SH + 2 reduced [2Fe-2S]-[ferredoxin] + 2 S-adenosyl-L-methionine = (sulfur carrier)-H + biotin + 2 5'-deoxyadenosine + 2 L-methionine + 2 oxidized [2Fe-2S]-[ferredoxin]. The protein operates within cofactor biosynthesis; biotin biosynthesis; biotin from 7,8-diaminononanoate: step 2/2. Catalyzes the conversion of dethiobiotin (DTB) to biotin by the insertion of a sulfur atom into dethiobiotin via a radical-based mechanism. In Azorhizobium caulinodans (strain ATCC 43989 / DSM 5975 / JCM 20966 / LMG 6465 / NBRC 14845 / NCIMB 13405 / ORS 571), this protein is Biotin synthase.